Reading from the N-terminus, the 277-residue chain is MEMO1 family protein CTN_0605 (277 aa).

It belongs to the MEMO1 family.

The sequence is that of MEMO1 family protein CTN_0605 from Thermotoga neapolitana (strain ATCC 49049 / DSM 4359 / NBRC 107923 / NS-E).